Consider the following 241-residue polypeptide: Homeobox protein TGIF2LX (241 aa).

Disordered stretches follow at residues 1–58 (MEAA…GNLP) and 126–210 (TGKD…SPEE). The span at 21–39 (AKTQSPAQDTSIMSRNNAD) shows a compositional bias: polar residues. The segment at residues 48–111 (EHKKKRKGNL…INARRRILPD (64 aa)) is a DNA-binding region (homeobox; TALE-type). Low complexity predominate over residues 195–206 (VSVTSPSSPELV).

It belongs to the TALE/TGIF homeobox family. Specifically expressed in adult testis.

Its subcellular location is the nucleus. In terms of biological role, may have a transcription role in testis. This Homo sapiens (Human) protein is Homeobox protein TGIF2LX (TGIF2LX).